Consider the following 872-residue polypeptide: Alanine--tRNA ligase (872 aa).

The Zn(2+) site is built by histidine 567, histidine 571, cysteine 669, and histidine 673.

This sequence belongs to the class-II aminoacyl-tRNA synthetase family. Requires Zn(2+) as cofactor.

The protein resides in the cytoplasm. The catalysed reaction is tRNA(Ala) + L-alanine + ATP = L-alanyl-tRNA(Ala) + AMP + diphosphate. Functionally, catalyzes the attachment of alanine to tRNA(Ala) in a two-step reaction: alanine is first activated by ATP to form Ala-AMP and then transferred to the acceptor end of tRNA(Ala). Also edits incorrectly charged Ser-tRNA(Ala) and Gly-tRNA(Ala) via its editing domain. This chain is Alanine--tRNA ligase, found in Streptococcus pneumoniae (strain CGSP14).